Here is a 38-residue protein sequence, read N- to C-terminus: Spheniscin-1 (38 aa).

3 disulfide bridges follow: C5/C33, C12/C27, and C17/C34.

In terms of assembly, monomer. In terms of tissue distribution, secreted into the stomach cavity.

The protein localises to the secreted. Has antifungal activity and antibacterial activity against Gram-positive and Gram-negative bacteria. Involved in the process of food preservation in the stomach during the incubation fast. May also be present during infection. The polypeptide is Spheniscin-1 (Aptenodytes patagonicus (King penguin)).